The following is a 235-amino-acid chain: Uridylate kinase (235 aa).

Position 10–13 (10–13 (KLSG)) interacts with ATP. UMP is bound at residue Gly-52. Positions 53 and 57 each coordinate ATP. Residues Asp-72 and 133–140 (TSNPYFST) contribute to the UMP site. ATP-binding residues include Thr-160, Tyr-166, and Asp-169.

Belongs to the UMP kinase family. In terms of assembly, homohexamer.

It localises to the cytoplasm. It catalyses the reaction UMP + ATP = UDP + ADP. It participates in pyrimidine metabolism; CTP biosynthesis via de novo pathway; UDP from UMP (UMPK route): step 1/1. Its activity is regulated as follows. Inhibited by UTP. Catalyzes the reversible phosphorylation of UMP to UDP. In Solibacter usitatus (strain Ellin6076), this protein is Uridylate kinase.